The following is a 123-amino-acid chain: Large ribosomal subunit protein bL19 (123 aa).

Belongs to the bacterial ribosomal protein bL19 family.

Its function is as follows. This protein is located at the 30S-50S ribosomal subunit interface and may play a role in the structure and function of the aminoacyl-tRNA binding site. The protein is Large ribosomal subunit protein bL19 of Thermomicrobium roseum (strain ATCC 27502 / DSM 5159 / P-2).